Here is a 249-residue protein sequence, read N- to C-terminus: Dof zinc finger protein DOF4.5 (249 aa).

The Dof-type zinc-finger motif lies at Arg25 to Ala79. The Zn(2+) site is built by Cys27, Cys30, Cys52, and Cys55.

Its subcellular location is the nucleus. Its function is as follows. Transcription factor that binds specifically to a 5'-AA[AG]G-3' consensus core sequence. The polypeptide is Dof zinc finger protein DOF4.5 (DOF4.5) (Arabidopsis thaliana (Mouse-ear cress)).